Consider the following 155-residue polypeptide: Xanthine-guanine phosphoribosyltransferase (155 aa).

5-phospho-alpha-D-ribose 1-diphosphate is bound by residues 37–38, Arg-69, and 90–98; these read RG and EDLVDTGTT. Arg-69 contacts GMP. Residue Asp-91 participates in Mg(2+) binding. The guanine site is built by Asp-94 and Ile-137. Residues Asp-94 and Ile-137 each contribute to the xanthine site. GMP-binding positions include 94–98 and 136–137; these read DTGTT and WI.

This sequence belongs to the purine/pyrimidine phosphoribosyltransferase family. XGPT subfamily. In terms of assembly, homotetramer. Mg(2+) serves as cofactor.

It localises to the cell inner membrane. It carries out the reaction GMP + diphosphate = guanine + 5-phospho-alpha-D-ribose 1-diphosphate. The enzyme catalyses XMP + diphosphate = xanthine + 5-phospho-alpha-D-ribose 1-diphosphate. The catalysed reaction is IMP + diphosphate = hypoxanthine + 5-phospho-alpha-D-ribose 1-diphosphate. Its pathway is purine metabolism; GMP biosynthesis via salvage pathway; GMP from guanine: step 1/1. It participates in purine metabolism; XMP biosynthesis via salvage pathway; XMP from xanthine: step 1/1. Purine salvage pathway enzyme that catalyzes the transfer of the ribosyl-5-phosphate group from 5-phospho-alpha-D-ribose 1-diphosphate (PRPP) to the N9 position of the 6-oxopurines guanine and xanthine to form the corresponding ribonucleotides GMP (guanosine 5'-monophosphate) and XMP (xanthosine 5'-monophosphate), with the release of PPi. To a lesser extent, also acts on hypoxanthine. The chain is Xanthine-guanine phosphoribosyltransferase from Aeromonas hydrophila subsp. hydrophila (strain ATCC 7966 / DSM 30187 / BCRC 13018 / CCUG 14551 / JCM 1027 / KCTC 2358 / NCIMB 9240 / NCTC 8049).